A 481-amino-acid chain; its full sequence is Proline--tRNA ligase (481 aa).

The protein belongs to the class-II aminoacyl-tRNA synthetase family. ProS type 3 subfamily. Homodimer.

The protein localises to the cytoplasm. It carries out the reaction tRNA(Pro) + L-proline + ATP = L-prolyl-tRNA(Pro) + AMP + diphosphate. Its function is as follows. Catalyzes the attachment of proline to tRNA(Pro) in a two-step reaction: proline is first activated by ATP to form Pro-AMP and then transferred to the acceptor end of tRNA(Pro). Can inadvertently accommodate and process cysteine. Misacylated Cys-tRNA(Pro) is not edited by ProRS; this function may be provided by ProX. In Acetoanaerobium sticklandii (strain ATCC 12662 / DSM 519 / JCM 1433 / CCUG 9281 / NCIMB 10654 / HF) (Clostridium sticklandii), this protein is Proline--tRNA ligase (proS).